Reading from the N-terminus, the 367-residue chain is Peptide chain release factor 2 (367 aa).

At Gln-250 the chain carries N5-methylglutamine.

The protein belongs to the prokaryotic/mitochondrial release factor family. In terms of processing, methylated by PrmC. Methylation increases the termination efficiency of RF2.

The protein localises to the cytoplasm. Functionally, peptide chain release factor 2 directs the termination of translation in response to the peptide chain termination codons UGA and UAA. In Chloroflexus aggregans (strain MD-66 / DSM 9485), this protein is Peptide chain release factor 2.